The chain runs to 151 residues: Protein NrdI (151 aa).

The protein belongs to the NrdI family.

Probably involved in ribonucleotide reductase function. This chain is Protein NrdI, found in Mycoplasmopsis pulmonis (strain UAB CTIP) (Mycoplasma pulmonis).